A 254-amino-acid polypeptide reads, in one-letter code: ATP synthase subunit a (254 aa).

Positions 1-6 are cleaved as a propeptide — removed in mature form; the sequence is MAFLIH. 7 helical membrane passes run 32–52, 83–103, 119–139, 146–166, 182–202, 207–227, and 228–248; these read LTNLGLYTILTVYLVLALHIM, IGAANEMYLPFIYSLFFFILI, SIMVSIGLSMTIFIGVTILGL, FFSFFVPSGTPLGLVPLLVPI, LFANVTAGHVLMKILAGFLAP, TFIISVLTVLPFIIFTGIIGL, and EIAVSFIQAYVFCVLTCSYLK.

This sequence belongs to the ATPase A chain family. F-type ATPases have 2 components, CF(1) - the catalytic core - and CF(0) - the membrane proton channel. CF(1) has five subunits: alpha(3), beta(3), gamma(1), delta(1), epsilon(1). CF(0) has three main subunits: a, b and c.

The protein localises to the mitochondrion inner membrane. Functionally, mitochondrial membrane ATP synthase (F(1)F(0) ATP synthase or Complex V) produces ATP from ADP in the presence of a proton gradient across the membrane which is generated by electron transport complexes of the respiratory chain. F-type ATPases consist of two structural domains, F(1) - containing the extramembraneous catalytic core and F(0) - containing the membrane proton channel, linked together by a central stalk and a peripheral stalk. During catalysis, ATP synthesis in the catalytic domain of F(1) is coupled via a rotary mechanism of the central stalk subunits to proton translocation. Key component of the proton channel; it may play a direct role in the translocation of protons across the membrane. The protein is ATP synthase subunit a (ATP6) of Mycosarcoma maydis (Corn smut fungus).